A 739-amino-acid polypeptide reads, in one-letter code: Putative apoptosis-inducing factor 1, mitochondrial (739 aa).

Residues 1–42 constitute a mitochondrion transit peptide; the sequence is MSIWGVRCLTQRFIRQAYILANRRLLGPVPQRSPPAYAPLRP. Positions 257 to 564 are FAD-dependent oxidoreductase; it reads YLIIGGGTAA…ARRNLYVAGD (308 aa). FAD contacts are provided by residues 261 to 265, Arg-295, Lys-300, Val-358, Arg-410, Asp-564, and 580 to 581; these read GGGTA and HH. A disordered region spans residues 644–681; that stretch reads VDQLSESSDSDVPETSTSSSQSSKSDAGASQDGVTCDP. Residues 656-676 are compositionally biased toward low complexity; sequence PETSTSSSQSSKSDAGASQDG.

This sequence belongs to the FAD-dependent oxidoreductase family. FAD is required as a cofactor.

The protein localises to the mitochondrion intermembrane space. The catalysed reaction is A + NADH + H(+) = AH2 + NAD(+). Functionally, probable NADH oxidoreductase. Mitochondrial effector of cell death that plays roles in developmentally regulated cell death and normal mitochondrial function. The polypeptide is Putative apoptosis-inducing factor 1, mitochondrial (AIF) (Drosophila melanogaster (Fruit fly)).